A 456-amino-acid chain; its full sequence is Chromosomal replication initiator protein DnaA (456 aa).

Positions 1-73 (MEIYLDNLWD…ADVVHDILGY (73 aa)) are domain I, interacts with DnaA modulators. The segment at 73–117 (YPVEIYLTTFLVEDSRKNDSGLIWSEHKSVNILGENLSIPKPLPA) is domain II. Residues 118 to 334 (NLNAKYMFSR…GALTRVVTYI (217 aa)) form a domain III, AAA+ region region. The ATP site is built by G162, G164, K165, and T166. A domain IV, binds dsDNA region spans residues 335-456 (SISGLPMTVE…SDRINFSSRH (122 aa)).

The protein belongs to the DnaA family. Oligomerizes as a right-handed, spiral filament on DNA at oriC.

The protein resides in the cytoplasm. Its function is as follows. Plays an essential role in the initiation and regulation of chromosomal replication. ATP-DnaA binds to the origin of replication (oriC) to initiate formation of the DNA replication initiation complex once per cell cycle. Binds the DnaA box (a 9 base pair repeat at the origin) and separates the double-stranded (ds)DNA. Forms a right-handed helical filament on oriC DNA; dsDNA binds to the exterior of the filament while single-stranded (ss)DNA is stabiized in the filament's interior. The ATP-DnaA-oriC complex binds and stabilizes one strand of the AT-rich DNA unwinding element (DUE), permitting loading of DNA polymerase. After initiation quickly degrades to an ADP-DnaA complex that is not apt for DNA replication. Binds acidic phospholipids. In Trichodesmium erythraeum (strain IMS101), this protein is Chromosomal replication initiator protein DnaA.